A 1010-amino-acid polypeptide reads, in one-letter code: Probable LRR receptor-like serine/threonine-protein kinase At3g47570 (1010 aa).

The signal sequence occupies residues 1–19 (MRLFLLLAFNALMLLETHG). The Extracellular portion of the chain corresponds to 20 to 645 (FTDETDRQAL…SSRLKKVVIG (626 aa)). N-linked (GlcNAc...) asparagine glycans are attached at residues N48 and N88. 10 LRR repeats span residues 89–113 (LSFL…VGQL), 114–137 (SRLE…LYNC), 139–161 (RLLN…LGSL), 162–185 (TNLV…LGNL), 186–209 (TLLE…VAQL), 211–233 (QIWS…LYNL), 234–258 (SSLK…GILL), 259–282 (PNLL…LSNI), 283–307 (STLE…NVPN), and 310–333 (LLFL…TSLT). N-linked (GlcNAc...) asparagine glycosylation is present at N136. Residue N184 is glycosylated (N-linked (GlcNAc...) asparagine). N-linked (GlcNAc...) asparagine glycans are attached at residues N221 and N232. N281 and N294 each carry an N-linked (GlcNAc...) asparagine glycan. 2 N-linked (GlcNAc...) asparagine glycosylation sites follow: N334 and N358. 11 LRR repeats span residues 335–359 (CTQL…IANL), 361–384 (AKLV…IGNL), 385–408 (INLQ…LGKL), 410–432 (NLRY…IGNM), 433–455 (TMLE…SLGN), 457–480 (SHLL…IMKI), 481–504 (QQLL…IGAL), 505–528 (QNLG…LGNC), 530–551 (TMES…LKGL), 552–574 (VGVK…YFAS), and 575–600 (FSKL…IFEN). N-linked (GlcNAc...) asparagine glycans are attached at residues N431, N455, and N470. 2 N-linked (GlcNAc...) asparagine glycosylation sites follow: N582 and N600. Residues 646–666 (VSVGITLLLLLFMASVTLIWL) form a helical membrane-spanning segment. The Cytoplasmic portion of the chain corresponds to 667–1010 (RKRKKNKETN…FFKASRTTWR (344 aa)). T699 carries the post-translational modification Phosphothreonine. The region spanning 702–1002 (FSSSNMVGSG…ELISIRERFF (301 aa)) is the Protein kinase domain. Residues 708 to 716 (VGSGSFGTV) and K731 contribute to the ATP site. Residues Y781 and Y826 each carry the phosphotyrosine modification. D839 acts as the Proton acceptor in catalysis. Y887 is modified (phosphotyrosine).

Belongs to the protein kinase superfamily. Ser/Thr protein kinase family.

The protein localises to the cell membrane. It carries out the reaction L-seryl-[protein] + ATP = O-phospho-L-seryl-[protein] + ADP + H(+). The catalysed reaction is L-threonyl-[protein] + ATP = O-phospho-L-threonyl-[protein] + ADP + H(+). This chain is Probable LRR receptor-like serine/threonine-protein kinase At3g47570, found in Arabidopsis thaliana (Mouse-ear cress).